The chain runs to 29 residues: Cycloviolacin-H2 (29 aa).

The cyclopeptide (Ser-Asn) cross-link spans 1–29; it reads SAIACGESCVYIPCFIPGCSCRNRVCYLN. 3 cysteine pairs are disulfide-bonded: Cys-5-Cys-19, Cys-9-Cys-21, and Cys-14-Cys-26.

In terms of processing, this is a cyclic peptide.

Its function is as follows. Probably participates in a plant defense mechanism. The protein is Cycloviolacin-H2 of Viola hederacea (Australian violet).